Consider the following 235-residue polypeptide: Aspartate/glutamate leucyltransferase (235 aa).

This sequence belongs to the R-transferase family. Bpt subfamily.

The protein localises to the cytoplasm. It catalyses the reaction N-terminal L-glutamyl-[protein] + L-leucyl-tRNA(Leu) = N-terminal L-leucyl-L-glutamyl-[protein] + tRNA(Leu) + H(+). The enzyme catalyses N-terminal L-aspartyl-[protein] + L-leucyl-tRNA(Leu) = N-terminal L-leucyl-L-aspartyl-[protein] + tRNA(Leu) + H(+). In terms of biological role, functions in the N-end rule pathway of protein degradation where it conjugates Leu from its aminoacyl-tRNA to the N-termini of proteins containing an N-terminal aspartate or glutamate. The protein is Aspartate/glutamate leucyltransferase of Pseudomonas putida (strain GB-1).